Here is a 339-residue protein sequence, read N- to C-terminus: Ketol-acid reductoisomerase (NADP(+)) (339 aa).

In terms of domain architecture, KARI N-terminal Rossmann spans 1-182; sequence MRVYYDRDAD…GGGRAGIIET (182 aa). NADP(+)-binding positions include 24–27, R48, S51, S53, and 83–86; these read YGSQ and DELQ. H108 is an active-site residue. G134 contacts NADP(+). The KARI C-terminal knotted domain maps to 183–328; that stretch reads TFKEECETDL…ERLRAMMPWI (146 aa). D191, E195, E227, and E231 together coordinate Mg(2+). Residue S252 participates in substrate binding.

Belongs to the ketol-acid reductoisomerase family. It depends on Mg(2+) as a cofactor.

The catalysed reaction is (2R)-2,3-dihydroxy-3-methylbutanoate + NADP(+) = (2S)-2-acetolactate + NADPH + H(+). The enzyme catalyses (2R,3R)-2,3-dihydroxy-3-methylpentanoate + NADP(+) = (S)-2-ethyl-2-hydroxy-3-oxobutanoate + NADPH + H(+). The protein operates within amino-acid biosynthesis; L-isoleucine biosynthesis; L-isoleucine from 2-oxobutanoate: step 2/4. Its pathway is amino-acid biosynthesis; L-valine biosynthesis; L-valine from pyruvate: step 2/4. Its function is as follows. Involved in the biosynthesis of branched-chain amino acids (BCAA). Catalyzes an alkyl-migration followed by a ketol-acid reduction of (S)-2-acetolactate (S2AL) to yield (R)-2,3-dihydroxy-isovalerate. In the isomerase reaction, S2AL is rearranged via a Mg-dependent methyl migration to produce 3-hydroxy-3-methyl-2-ketobutyrate (HMKB). In the reductase reaction, this 2-ketoacid undergoes a metal-dependent reduction by NADPH to yield (R)-2,3-dihydroxy-isovalerate. This Methylobacterium nodulans (strain LMG 21967 / CNCM I-2342 / ORS 2060) protein is Ketol-acid reductoisomerase (NADP(+)).